The sequence spans 291 residues: Maintenance of mitochondrial morphology protein 1 (291 aa).

The Lumenal segment spans residues 1–16 (MPNNYVFSLQPTFTQG). The chain crosses the membrane as a helical span at residues 17 to 37 (LILGQLSILVLLGMILKFLFL). Over 38–291 (DSTQHPFESS…KKEMSDADLS (254 aa)) the chain is Cytoplasmic. The region spanning 73–277 (NAESAEWFNV…LPGLASVVDV (205 aa)) is the SMP-LTD domain.

The protein belongs to the MMM1 family. Homodimer. Component of the ER-mitochondria encounter structure (ERMES) or MDM complex, composed of MMM1, MDM10, MDM12 and MDM34. An MMM1 homodimer associates with one molecule of MDM12 on each side in a pairwise head-to-tail manner, and the SMP-LTD domains of MMM1 and MDM12 generate a continuous hydrophobic tunnel for phospholipid trafficking.

Its subcellular location is the endoplasmic reticulum membrane. Functionally, component of the ERMES/MDM complex, which serves as a molecular tether to connect the endoplasmic reticulum (ER) and mitochondria. Components of this complex are involved in the control of mitochondrial shape and protein biogenesis, and function in nonvesicular lipid trafficking between the ER and mitochondria. The MDM12-MMM1 subcomplex functions in the major beta-barrel assembly pathway that is responsible for biogenesis of all outer membrane beta-barrel proteins, and acts in a late step after the SAM complex. The MDM10-MDM12-MMM1 subcomplex further acts in the TOM40-specific pathway after the action of the MDM12-MMM1 complex. Essential for establishing and maintaining the structure of mitochondria and maintenance of mtDNA nucleoids. In Laccaria bicolor (strain S238N-H82 / ATCC MYA-4686) (Bicoloured deceiver), this protein is Maintenance of mitochondrial morphology protein 1.